We begin with the raw amino-acid sequence, 300 residues long: MKIDLTRLVTESRNPASEQIDTLPTLDMLKVINQQDQLVALAVAQTLPQVAQAVEAIATAFAQGGRLIYMGAGTSGRLGILDASECPPTYGSQPEQVIGLIAGGHTAILKAVENAEDNRELGQSDLKALHLSEKDVLVGIAASGRTPYVIAGMEYARSVGATVVSLACNPGCPMEAYADIVITPVVGAEVVTGSSRMKAGTAQKLVLNMLTTGAMIKSGKVFGNLMVDVEATNAKLIQRQTNIVVEATGVSAEQAEAALAACGRHCKTAILMILGGFSAEQAAQKLTQHQGFIRAALNQE.

Positions 57–220 constitute an SIS domain; that stretch reads IATAFAQGGR…TTGAMIKSGK (164 aa). Glu-85 serves as the catalytic Proton donor. Residue Glu-116 is part of the active site.

The protein belongs to the GCKR-like family. MurNAc-6-P etherase subfamily. In terms of assembly, homodimer.

The catalysed reaction is N-acetyl-D-muramate 6-phosphate + H2O = N-acetyl-D-glucosamine 6-phosphate + (R)-lactate. The protein operates within amino-sugar metabolism; 1,6-anhydro-N-acetylmuramate degradation. Its pathway is amino-sugar metabolism; N-acetylmuramate degradation. It functions in the pathway cell wall biogenesis; peptidoglycan recycling. In terms of biological role, specifically catalyzes the cleavage of the D-lactyl ether substituent of MurNAc 6-phosphate, producing GlcNAc 6-phosphate and D-lactate. Together with AnmK, is also required for the utilization of anhydro-N-acetylmuramic acid (anhMurNAc) either imported from the medium or derived from its own cell wall murein, and thus plays a role in cell wall recycling. In Vibrio cholerae serotype O1 (strain ATCC 39315 / El Tor Inaba N16961), this protein is N-acetylmuramic acid 6-phosphate etherase 1.